Reading from the N-terminus, the 199-residue chain is NAD(P)H dehydrogenase (quinone) (199 aa).

Residues 4 to 190 (VLVLYYSTYG…DGARYQGRHV (187 aa)) form the Flavodoxin-like domain. FMN is bound by residues 10–15 (STYGHI) and 78–80 (TRY). Residue Y12 participates in NAD(+) binding. A substrate-binding site is contributed by W98. Residues 113 to 119 (SSASQHG) and H134 contribute to the FMN site.

This sequence belongs to the WrbA family. FMN serves as cofactor.

The catalysed reaction is a quinone + NADH + H(+) = a quinol + NAD(+). The enzyme catalyses a quinone + NADPH + H(+) = a quinol + NADP(+). The sequence is that of NAD(P)H dehydrogenase (quinone) from Methylobacterium sp. (strain 4-46).